We begin with the raw amino-acid sequence, 314 residues long: tRNA-cytidine(32) 2-sulfurtransferase (314 aa).

The PP-loop motif motif lies at 39–44 (SGGKDS). Residues C114, C117, and C205 each coordinate [4Fe-4S] cluster.

Belongs to the TtcA family. As to quaternary structure, homodimer. Requires Mg(2+) as cofactor. [4Fe-4S] cluster is required as a cofactor.

It localises to the cytoplasm. The catalysed reaction is cytidine(32) in tRNA + S-sulfanyl-L-cysteinyl-[cysteine desulfurase] + AH2 + ATP = 2-thiocytidine(32) in tRNA + L-cysteinyl-[cysteine desulfurase] + A + AMP + diphosphate + H(+). It participates in tRNA modification. Functionally, catalyzes the ATP-dependent 2-thiolation of cytidine in position 32 of tRNA, to form 2-thiocytidine (s(2)C32). The sulfur atoms are provided by the cysteine/cysteine desulfurase (IscS) system. The chain is tRNA-cytidine(32) 2-sulfurtransferase from Cupriavidus metallidurans (strain ATCC 43123 / DSM 2839 / NBRC 102507 / CH34) (Ralstonia metallidurans).